The following is a 125-amino-acid chain: Small ribosomal subunit protein bS6 (125 aa).

Positions 94 to 125 are disordered; that stretch reads KAETGASSMMKTVEREEARKASQAEFAASNER. The segment covering 105–115 has biased composition (basic and acidic residues); sequence TVEREEARKAS.

It belongs to the bacterial ribosomal protein bS6 family.

Binds together with bS18 to 16S ribosomal RNA. The chain is Small ribosomal subunit protein bS6 from Acidovorax ebreus (strain TPSY) (Diaphorobacter sp. (strain TPSY)).